We begin with the raw amino-acid sequence, 376 residues long: Germination-specific cysteine protease 1 (376 aa).

Positions 1-22 are cleaved as a signal peptide; it reads MAPSTKVLSLLLLYVVVSLASG. Positions 23–144 are cleaved as a propeptide — activation peptide; that stretch reads DESIINDHLQ…KYSAAVNGKE (122 aa). An N-linked (GlcNAc...) asparagine glycan is attached at N93. Cystine bridges form between C166-C208, C200-C241, and C299-C351. C169 is a catalytic residue. Residues H305 and N325 contribute to the active site.

It belongs to the peptidase C1 family.

Its function is as follows. Probable thiol protease. The sequence is that of Germination-specific cysteine protease 1 from Arabidopsis thaliana (Mouse-ear cress).